A 351-amino-acid chain; its full sequence is MAPVLPLVLPLQPRIRLAQGLWLLSWLLVLVGGLTLLCSGHLLVQLWHLGTFLAPSCPFSALPQVALAASAVALGTGLVGSGASRASLDAEQYPPWRGVLGPLLVAGTAGGGGLLVLALGLALALPGTLDTGLEEGLGSALVHYKDTEVPGRCQAKRLLDELQLRHHCCGRHGYKDWFGIQWVSNRYLDPNDPDVVDRIQSNVEGLYLIDGVPFSCCNPHSPRPCLQSQLSDPHAHPLFDPRQPNLNLWSQGCHEVLLGHLQGLASTLGNMLAVTFLLQTLVLLGLRYLQTALEGLGGVIDGEGEAQGYLFPAGLKDMLKTAWLQGAGPHRPAPGETPPEEKPPKECLPEA.

The Cytoplasmic portion of the chain corresponds to 1 to 19; that stretch reads MAPVLPLVLPLQPRIRLAQ. Residues 20 to 43 form a helical membrane-spanning segment; the sequence is GLWLLSWLLVLVGGLTLLCSGHLL. Over 44–64 the chain is Lumenal; that stretch reads VQLWHLGTFLAPSCPFSALPQ. The helical transmembrane segment at 65-84 threads the bilayer; the sequence is VALAASAVALGTGLVGSGAS. Residues 85–102 are Cytoplasmic-facing; that stretch reads RASLDAEQYPPWRGVLGP. Residues 103 to 125 traverse the membrane as a helical segment; sequence LLVAGTAGGGGLLVLALGLALAL. Residues 126–264 lie on the Lumenal side of the membrane; it reads PGTLDTGLEE…EVLLGHLQGL (139 aa). Residues 265-286 form a helical membrane-spanning segment; it reads ASTLGNMLAVTFLLQTLVLLGL. Topologically, residues 287 to 351 are cytoplasmic; that stretch reads RYLQTALEGL…KPPKECLPEA (65 aa). Positions 325–351 are disordered; the sequence is QGAGPHRPAPGETPPEEKPPKECLPEA. A compositionally biased stretch (basic and acidic residues) spans 339 to 351; sequence PEEKPPKECLPEA.

The protein belongs to the PRPH2/ROM1 family. In terms of assembly, homodimer; disulfide-linked. Forms a homotetramer. Forms a heterotetramer with PRPH2. Homotetramer and heterotetramer core complexes go on to form higher order complexes by formation of intermolecular disulfide bonds. Interacts with STX3. Interacts with SNAP25. Retina photoreceptor (at protein level). In rim region of ROS disks (at protein level).

It localises to the photoreceptor inner segment membrane. The protein resides in the photoreceptor outer segment membrane. Functionally, plays a role in rod outer segment (ROS) morphogenesis. May play a role with PRPH2 in the maintenance of the structure of ROS curved disks. Plays a role in the organization of the ROS and maintenance of ROS disk diameter. Involved in the maintenance of the retina outer nuclear layer. In Bos taurus (Bovine), this protein is Rod outer segment membrane protein 1 (ROM1).